The chain runs to 228 residues: LexA repressor (228 aa).

The H-T-H motif DNA-binding region spans 28–48 (IREIGEALDIRSTNGVNDHLK). Residues S146 and K183 each act as for autocatalytic cleavage activity in the active site.

This sequence belongs to the peptidase S24 family. As to quaternary structure, homodimer.

The catalysed reaction is Hydrolysis of Ala-|-Gly bond in repressor LexA.. Functionally, represses a number of genes involved in the response to DNA damage (SOS response), including recA and lexA. In the presence of single-stranded DNA, RecA interacts with LexA causing an autocatalytic cleavage which disrupts the DNA-binding part of LexA, leading to derepression of the SOS regulon and eventually DNA repair. This is LexA repressor from Anaeromyxobacter dehalogenans (strain 2CP-1 / ATCC BAA-258).